The primary structure comprises 138 residues: Ribulose bisphosphate carboxylase small subunit (138 aa).

This sequence belongs to the RuBisCO small chain family. As to quaternary structure, heterohexadecamer of 8 large and 8 small subunits.

Its subcellular location is the plastid. The protein resides in the chloroplast. RuBisCO catalyzes two reactions: the carboxylation of D-ribulose 1,5-bisphosphate, the primary event in carbon dioxide fixation, as well as the oxidative fragmentation of the pentose substrate in the photorespiration process. Both reactions occur simultaneously and in competition at the same active site. Although the small subunit is not catalytic it is essential for maximal activity. This is Ribulose bisphosphate carboxylase small subunit from Porphyra purpurea (Red seaweed).